Here is a 295-residue protein sequence, read N- to C-terminus: 33 kDa chaperonin (295 aa).

Intrachain disulfides connect cysteine 238/cysteine 240 and cysteine 271/cysteine 274.

It belongs to the HSP33 family. Post-translationally, under oxidizing conditions two disulfide bonds are formed involving the reactive cysteines. Under reducing conditions zinc is bound to the reactive cysteines and the protein is inactive.

It is found in the cytoplasm. Redox regulated molecular chaperone. Protects both thermally unfolding and oxidatively damaged proteins from irreversible aggregation. Plays an important role in the bacterial defense system toward oxidative stress. The polypeptide is 33 kDa chaperonin (Clostridium botulinum (strain Eklund 17B / Type B)).